The sequence spans 159 residues: Probable inactive acireductone dioxygenase 2 (159 aa).

Belongs to the acireductone dioxygenase (ARD) family.

It localises to the cytoplasm. Its subcellular location is the nucleus. Functionally, probable inactive acireductone dioxygenase. The sequence is that of Probable inactive acireductone dioxygenase 2 from Caenorhabditis briggsae.